We begin with the raw amino-acid sequence, 448 residues long: Gamete and mating-type specific protein A (448 aa).

Positions 1 to 19 (MKLILVLLCLISTLFVVKG) are cleaved as a signal peptide. The region spanning 30–157 (VSYHNKWRSS…PDKSEVSCSY (128 aa)) is the SCP domain. 3 N-linked (GlcNAc...) asparagine glycosylation sites follow: Asn-55, Asn-98, and Asn-119. The interval 171–242 (PKTTTPAPTT…PTTPAPTSTL (72 aa)) is disordered. Residues 178–236 (PTTPAPTTPKPTTPAPTTPKPTTPAPTTPKPTTPAPTTPKPTTPAPTTPKPTTPAPTTP) show a composition bias toward pro residues. Catalysis depends on residues Cys-262, His-397, and Asn-415.

Belongs to the peptidase C1 family.

It localises to the secreted. Functionally, thiol protease that seems to be involved in the sexual development. In Dictyostelium discoideum (Social amoeba), this protein is Gamete and mating-type specific protein A (gmsA).